An 863-amino-acid polypeptide reads, in one-letter code: ATP-dependent helicase Lhr-Core protein 2 (863 aa).

The ATP site is built by F30, Q37, K60, T61, D179, E180, R377, and H380. The region spanning 41–234 (VIEIHKGENV…FVFGFNDDGT (194 aa)) is the Helicase ATP-binding domain. A DEAH box motif is present at residues 179–182 (DEVH). Residues 275-424 (RLDELIEQHR…RIKIPQNPLD (150 aa)) form the Helicase C-terminal domain. The segment at 418 to 512 (IPQNPLDVLV…AIYYMNTGTI (95 aa)) is WH domain. The domain 4 stretch occupies residues 513 to 863 (PDEAKIEVYT…KIMAMIGELE (351 aa)).

Belongs to the Lhr helicase family. Lhr-Core subfamily. Monomer.

The catalysed reaction is ATP + H2O = ADP + phosphate + H(+). Unwinding of dsRNA duplexes is inhibited by AMP-PMP and ATP-gamma-S. A DNA:RNA helicase with a significant strand annealing activity, probably involved in DNA repair and RNA transactions. In vitro has a slow helicase activity with a preference for 3'-overhang duplexes; displaces RNA from 3'-overhang DNA:RNA or RNA:RNA duplexes. 3'-tailed double-stranded (ds)DNA is not unwound. The slow helicase activity on RNA duplexes is ATP-independent. Has strand annealing properties in the absence of ATP; forms 3'-overhang DNA:RNA, 3'-overhang dsRNA and 3'-overhang dsDNA duplexes but not 5'-overhang duplexes. A nucleic acid-dependent ATPase; single-stranded (ss)DNA and RNA are equally stimulatory. Binds ssDNA, RNA, dsDNA and dsRNA duplexes. This is ATP-dependent helicase Lhr-Core protein 2 from Thermococcus barophilus (strain DSM 11836 / MP).